A 282-amino-acid polypeptide reads, in one-letter code: ATP phosphoribosyltransferase (282 aa).

Belongs to the ATP phosphoribosyltransferase family. Long subfamily. Requires Mg(2+) as cofactor.

It is found in the cytoplasm. It carries out the reaction 1-(5-phospho-beta-D-ribosyl)-ATP + diphosphate = 5-phospho-alpha-D-ribose 1-diphosphate + ATP. The protein operates within amino-acid biosynthesis; L-histidine biosynthesis; L-histidine from 5-phospho-alpha-D-ribose 1-diphosphate: step 1/9. Feedback inhibited by histidine. Its function is as follows. Catalyzes the condensation of ATP and 5-phosphoribose 1-diphosphate to form N'-(5'-phosphoribosyl)-ATP (PR-ATP). Has a crucial role in the pathway because the rate of histidine biosynthesis seems to be controlled primarily by regulation of HisG enzymatic activity. This chain is ATP phosphoribosyltransferase, found in Haloarcula marismortui (strain ATCC 43049 / DSM 3752 / JCM 8966 / VKM B-1809) (Halobacterium marismortui).